Here is a 91-residue protein sequence, read N- to C-terminus: uncharacterized protein (91 aa).

The disordered stretch occupies residues 71-91 (NRENNSRSSVKQIINQETEEE). The segment covering 76 to 91 (SRSSVKQIINQETEEE) has biased composition (polar residues).

This is an uncharacterized protein from Bacillus subtilis (strain 168).